A 143-amino-acid chain; its full sequence is Small ribosomal subunit protein bS6 (143 aa).

Residues 100–143 (SPIIKMKDERREVVELTTSGSEDNQKDHHKEDLDKKTDEFSEEN) are disordered. 2 stretches are compositionally biased toward basic and acidic residues: residues 104-113 (KMKDERREVV) and 122-143 (DNQK…SEEN).

The protein belongs to the bacterial ribosomal protein bS6 family.

Its function is as follows. Binds together with bS18 to 16S ribosomal RNA. The polypeptide is Small ribosomal subunit protein bS6 (Hamiltonella defensa subsp. Acyrthosiphon pisum (strain 5AT)).